The following is a 472-amino-acid chain: MPREVITIQCGQCGNQIGEVFWNRLCTEHGINPDGTLRPEAYTFNDRKDVFFYQSDDEHYVPRAILLDTEPGVISHIRNGPIKELINPENVYIDSTGGGAGNIWTKGFQCGEAGFEKIVEIIDREADGADSLAGFSLTHSIAGGTGSGMGSFLLDRLSDRYPKALLQTYSVFPNTTADIIVQPYNSILTLQRLALCADAVVVLDNTALDRIITNHIPNELLTNPFEHVNSLVSTVMAASTSTLRLPGFMSNDLLSLVSSLVPTPRLHFLMSSYTPITSSSLNVKEHTKDQEAGSGAVAGAAAGATRRQVHTDSIVQLVKRLLHPTNGMVSCGRDGKYISLLNIVQGEAESNQLYKSLQQIKEGRDVKFIDWGPSNMQMALSKRSPFTNEAHKVSGLMLANHTAIRKIFDNINNTFTQLFSKRAYLQNYIDSMVTGGEPEILEQFTDAQAVCTSLSKEYEAAESKDYLEYIGM.

Ala142–Gly148 contributes to the GTP binding site.

Belongs to the tubulin family. Component of the gamma-tubulin small complex (gamma-TuSC) composed of tubulin gamma chain, gamma-tubulin complex protein 2 (GCP2) and gamma-tubulin complex protein 3 (GCP3). Interacts with GCP2 and GCP3. Interacts with EB1.

The protein localises to the cytoplasm. The protein resides in the cytoskeleton. Its subcellular location is the flagellum axoneme. It localises to the flagellum basal body. It is found in the spindle. The protein localises to the microtubule organizing center. Its function is as follows. Tubulin is the major constituent of microtubules (Potential). The gamma chain is found at microtubule organizing centers (MTOC) such as the centrosome. Component of the gamma-tubulin small complex (gamma-TuSC) involved in microtubule nucleation for the formation of median bodies and in the biogenesis of flagella. Gamma-TuSC may be required for the correct positioning of EB1 within the trophozoites. In Giardia intestinalis (strain ATCC 50803 / WB clone C6) (Giardia lamblia), this protein is Tubulin gamma chain.